We begin with the raw amino-acid sequence, 252 residues long: Chitooligosaccharide deacetylase (252 aa).

The Mg(2+) site is built by H61 and H125.

It belongs to the YdjC deacetylase family. ChbG subfamily. Homodimer. Requires Mg(2+) as cofactor.

The protein localises to the cytoplasm. It carries out the reaction N,N'-diacetylchitobiose + H2O = N-acetyl-beta-D-glucosaminyl-(1-&gt;4)-D-glucosamine + acetate. The catalysed reaction is diacetylchitobiose-6'-phosphate + H2O = N'-monoacetylchitobiose-6'-phosphate + acetate. It functions in the pathway glycan degradation; chitin degradation. In terms of biological role, involved in the degradation of chitin. ChbG is essential for growth on the acetylated chitooligosaccharides chitobiose and chitotriose but is dispensable for growth on cellobiose and chitosan dimer, the deacetylated form of chitobiose. Deacetylation of chitobiose-6-P and chitotriose-6-P is necessary for both the activation of the chb promoter by the regulatory protein ChbR and the hydrolysis of phosphorylated beta-glucosides by the phospho-beta-glucosidase ChbF. Catalyzes the removal of only one acetyl group from chitobiose-6-P to yield monoacetylchitobiose-6-P, the inducer of ChbR and the substrate of ChbF. The polypeptide is Chitooligosaccharide deacetylase (Salmonella newport (strain SL254)).